Here is a 344-residue protein sequence, read N- to C-terminus: Sulfate/thiosulfate import ATP-binding protein CysA (344 aa).

The region spanning 9–239 is the ABC transporter domain; it reads IQVSQVSKQF…PATPFVMSFI (231 aa). 41-48 contributes to the ATP binding site; that stretch reads GPSGSGKS.

This sequence belongs to the ABC transporter superfamily. Sulfate/tungstate importer (TC 3.A.1.6) family. In terms of assembly, the complex is composed of two ATP-binding proteins (CysA), two transmembrane proteins (CysT and CysW) and a solute-binding protein (CysP).

The protein localises to the cell inner membrane. The catalysed reaction is sulfate(out) + ATP + H2O = sulfate(in) + ADP + phosphate + H(+). The enzyme catalyses thiosulfate(out) + ATP + H2O = thiosulfate(in) + ADP + phosphate + H(+). In terms of biological role, part of the ABC transporter complex CysAWTP involved in sulfate/thiosulfate import. Responsible for energy coupling to the transport system. In Synechococcus elongatus (strain ATCC 33912 / PCC 7942 / FACHB-805) (Anacystis nidulans R2), this protein is Sulfate/thiosulfate import ATP-binding protein CysA.